Consider the following 446-residue polypeptide: Alpha-1,6-mannosyl-glycoprotein 2-beta-N-acetylglucosaminyltransferase (446 aa).

Topologically, residues 1–9 are cytoplasmic; it reads MRFRIYKRK. The chain crosses the membrane as a helical; Signal-anchor for type II membrane protein span at residues 10–29; it reads VLILTFVVAACGFVLWSSNG. The Lumenal portion of the chain corresponds to 30–446; the sequence is RQRKNEALAP…ELCKSYRRLQ (417 aa). N-linked (GlcNAc...) asparagine glycosylation is found at asparagine 69 and asparagine 86. Substrate contacts are provided by residues 123–127 and aspartate 154; that span reads QVHNR. A disulfide bond links cysteine 196 and cysteine 210. Residue 229–233 coordinates substrate; sequence QTKHH. Aspartate 261 lines the Mn(2+) pocket. Cysteine 283 and cysteine 286 are disulfide-bonded. Position 298 (arginine 298) interacts with substrate. 3 disulfides stabilise this stretch: cysteine 334–cysteine 357, cysteine 339–cysteine 439, and cysteine 378–cysteine 386. Histidine 374 is a Mn(2+) binding site.

The protein belongs to the glycosyltransferase 16 (GT16) protein family. In terms of assembly, homodimer. Mn(2+) serves as cofactor.

It is found in the golgi apparatus membrane. It carries out the reaction an N(4)-{beta-D-GlcNAc-(1-&gt;2)-alpha-D-Man-(1-&gt;3)-[alpha-D-Man-(1-&gt;6)]-beta-D-Man-(1-&gt;4)-beta-D-GlcNAc-(1-&gt;4)-beta-D-GlcNAc}-L-asparaginyl-[protein] + UDP-N-acetyl-alpha-D-glucosamine = N(4)-{beta-D-GlcNAc-(1-&gt;2)-alpha-D-Man-(1-&gt;3)-[beta-D-GlcNAc-(1-&gt;2)-alpha-D-Man-(1-&gt;6)]-beta-D-Man-(1-&gt;4)-beta-D-GlcNAc-(1-&gt;4)-beta-D-GlcNAc}-L-asparaginyl-[protein] + UDP + H(+). Its pathway is protein modification; protein glycosylation. Its function is as follows. Plays an essential role in protein N-glycosylation. Catalyzes the transfer of N-acetylglucosamine (GlcNAc) onto the free terminal mannose moiety in the core structure of the nascent N-linked glycan chain, giving rise to the second branch in complex glycans. The chain is Alpha-1,6-mannosyl-glycoprotein 2-beta-N-acetylglucosaminyltransferase (MGAT2) from Sus scrofa (Pig).